Reading from the N-terminus, the 268-residue chain is Hydroxyethylthiazole kinase (268 aa).

M47 is a substrate binding site. Residues R122 and T168 each coordinate ATP. A195 is a binding site for substrate.

Belongs to the Thz kinase family. The cofactor is Mg(2+).

It catalyses the reaction 5-(2-hydroxyethyl)-4-methylthiazole + ATP = 4-methyl-5-(2-phosphooxyethyl)-thiazole + ADP + H(+). The protein operates within cofactor biosynthesis; thiamine diphosphate biosynthesis; 4-methyl-5-(2-phosphoethyl)-thiazole from 5-(2-hydroxyethyl)-4-methylthiazole: step 1/1. Functionally, catalyzes the phosphorylation of the hydroxyl group of 4-methyl-5-beta-hydroxyethylthiazole (THZ). This Rhizobium rhizogenes (strain K84 / ATCC BAA-868) (Agrobacterium radiobacter) protein is Hydroxyethylthiazole kinase.